Consider the following 250-residue polypeptide: 5'-nucleotidase SurE (250 aa).

Residues Asp9, Asp10, Ser40, and Asn92 each contribute to the a divalent metal cation site.

It belongs to the SurE nucleotidase family. A divalent metal cation is required as a cofactor.

Its subcellular location is the cytoplasm. It carries out the reaction a ribonucleoside 5'-phosphate + H2O = a ribonucleoside + phosphate. In terms of biological role, nucleotidase that shows phosphatase activity on nucleoside 5'-monophosphates. The protein is 5'-nucleotidase SurE of Shewanella pealeana (strain ATCC 700345 / ANG-SQ1).